A 63-amino-acid polypeptide reads, in one-letter code: Small ribosomal subunit protein bS21 (63 aa).

Belongs to the bacterial ribosomal protein bS21 family.

The polypeptide is Small ribosomal subunit protein bS21 (Syntrophus aciditrophicus (strain SB)).